A 638-amino-acid polypeptide reads, in one-letter code: Chaperone protein DnaK (638 aa).

Thr-198 is subject to Phosphothreonine; by autocatalysis. Residues 598–638 (YEASQKEAAEADAKADAAKDSDVVDADFEEIDEDDDKKKSA) form a disordered region. A compositionally biased stretch (basic and acidic residues) spans 601-619 (SQKEAAEADAKADAAKDSD). Acidic residues predominate over residues 620-632 (VVDADFEEIDEDD).

It belongs to the heat shock protein 70 family.

Functionally, acts as a chaperone. In Mesorhizobium japonicum (strain LMG 29417 / CECT 9101 / MAFF 303099) (Mesorhizobium loti (strain MAFF 303099)), this protein is Chaperone protein DnaK.